Consider the following 240-residue polypeptide: Proteasome subunit alpha (240 aa).

It belongs to the peptidase T1A family. The 20S proteasome core is composed of 14 alpha and 14 beta subunits that assemble into four stacked heptameric rings, resulting in a barrel-shaped structure. The two inner rings, each composed of seven catalytic beta subunits, are sandwiched by two outer rings, each composed of seven alpha subunits. The catalytic chamber with the active sites is on the inside of the barrel. Has a gated structure, the ends of the cylinder being occluded by the N-termini of the alpha-subunits. Is capped at one or both ends by the proteasome regulatory ATPase, PAN.

Its subcellular location is the cytoplasm. With respect to regulation, the formation of the proteasomal ATPase PAN-20S proteasome complex, via the docking of the C-termini of PAN into the intersubunit pockets in the alpha-rings, triggers opening of the gate for substrate entry. Interconversion between the open-gate and close-gate conformations leads to a dynamic regulation of the 20S proteasome proteolysis activity. Its function is as follows. Component of the proteasome core, a large protease complex with broad specificity involved in protein degradation. This is Proteasome subunit alpha from Methanoregula boonei (strain DSM 21154 / JCM 14090 / 6A8).